Reading from the N-terminus, the 362-residue chain is tRNA/tmRNA (uracil-C(5))-methyltransferase (362 aa).

The S-adenosyl-L-methionine site is built by Q182, Y210, N215, E231, and D293. Catalysis depends on C318, which acts as the Nucleophile. Catalysis depends on E352, which acts as the Proton acceptor.

Belongs to the class I-like SAM-binding methyltransferase superfamily. RNA M5U methyltransferase family. TrmA subfamily.

The enzyme catalyses uridine(54) in tRNA + S-adenosyl-L-methionine = 5-methyluridine(54) in tRNA + S-adenosyl-L-homocysteine + H(+). The catalysed reaction is uridine(341) in tmRNA + S-adenosyl-L-methionine = 5-methyluridine(341) in tmRNA + S-adenosyl-L-homocysteine + H(+). Dual-specificity methyltransferase that catalyzes the formation of 5-methyluridine at position 54 (m5U54) in all tRNAs, and that of position 341 (m5U341) in tmRNA (transfer-mRNA). This is tRNA/tmRNA (uracil-C(5))-methyltransferase from Neisseria gonorrhoeae (strain ATCC 700825 / FA 1090).